The sequence spans 516 residues: Oxysterol-binding protein-like protein 1 (516 aa).

Disordered regions lie at residues 168–240 (PLGK…SQKS) and 459–501 (KQEI…EEGK). Polar residues predominate over residues 178–187 (SRTTSSQSVA). Phosphoserine is present on Ser182. The span at 197–206 (TSKKKSSKKN) shows a compositional bias: basic residues. The segment covering 218-238 (DRSSTAPSTAESNNEHLSSSQ) has biased composition (polar residues).

Belongs to the OSBP family.

It is found in the endoplasmic reticulum. This Schizosaccharomyces pombe (strain 972 / ATCC 24843) (Fission yeast) protein is Oxysterol-binding protein-like protein 1 (obp1).